A 206-amino-acid polypeptide reads, in one-letter code: Cytochrome c biogenesis ATP-binding export protein CcmA (206 aa).

Residues 2 to 206 (LEARDVVCIR…IQLTPSEGTP (205 aa)) form the ABC transporter domain. ATP is bound at residue 34–41 (GANGVGKT).

The protein belongs to the ABC transporter superfamily. CcmA exporter (TC 3.A.1.107) family. As to quaternary structure, the complex is composed of two ATP-binding proteins (CcmA) and two transmembrane proteins (CcmB).

Its subcellular location is the cell inner membrane. It catalyses the reaction heme b(in) + ATP + H2O = heme b(out) + ADP + phosphate + H(+). Functionally, part of the ABC transporter complex CcmAB involved in the biogenesis of c-type cytochromes; once thought to export heme, this seems not to be the case, but its exact role is uncertain. Responsible for energy coupling to the transport system. The protein is Cytochrome c biogenesis ATP-binding export protein CcmA of Pectobacterium atrosepticum (strain SCRI 1043 / ATCC BAA-672) (Erwinia carotovora subsp. atroseptica).